A 1044-amino-acid chain; its full sequence is GRB10-interacting GYF protein 1 (1044 aa).

Phosphoserine occurs at positions 24, 28, 137, and 157. Disordered regions lie at residues 104 to 290 (GKGA…DGLP) and 306 to 424 (ASGA…LEDE). Basic and acidic residues-rich tracts occupy residues 148-179 (NPRE…RSGF) and 186-203 (PRKE…SLRE). Phosphoserine is present on Ser228. Basic and acidic residues-rich tracts occupy residues 237–265 (GWRE…EDGR) and 316–332 (GPKE…FRGL). Residues 333 to 350 (EEEEEEEEEPSEGVDEER) are compositionally biased toward acidic residues. Ser343 is modified (phosphoserine). Residues 366 to 379 (NSSSPSSLPALGPL) are compositionally biased toward low complexity. A compositionally biased stretch (basic and acidic residues) spans 389–403 (AVEKELPPAEGDELR). The residue at position 408 (Ser408) is a Phosphoserine. Residues 476 to 524 (ARKWFYKDPQGEIQGPFTTQEMAEWFQAGYFSMSLLVKRGCDEGFQPLG) form the GYF domain. Phosphoserine occurs at positions 540 and 634. Residues 692–706 (KREEEERKRREEKRR) are compositionally biased toward basic and acidic residues. Disordered stretches follow at residues 692 to 721 (KREE…RQEE), 820 to 842 (EAGP…LGLW), 855 to 883 (SLGL…RKKT), 966 to 987 (QKAS…QEAW), 1000 to 1019 (NHST…RALM), and 1024 to 1044 (PSIL…VDDY). Gly residues predominate over residues 829 to 839 (DKSGGSSGGNL). Low complexity-rich tracts occupy residues 855 to 877 (SLGL…LSGR) and 970 to 984 (QQRQ…QQQQ). Position 863 is a phosphoserine (Ser863).

Belongs to the GIGYF family. As to quaternary structure, interacts with GRB10. This transient binding is increased under IGF1 stimulation and leads to recruitment of GIGYF1/GRB10 complex to IGF1 receptor. Interacts with DDX6. Ubiquitous. Lower expression in skeletal muscle, liver and testis.

Functionally, may act cooperatively with GRB10 to regulate tyrosine kinase receptor signaling. May increase IGF1 receptor phosphorylation under IGF1 stimulation as well as phosphorylation of IRS1 and SHC1. The protein is GRB10-interacting GYF protein 1 (Gigyf1) of Mus musculus (Mouse).